Reading from the N-terminus, the 273-residue chain is 2-dehydro-3-deoxyphosphooctonate aldolase (273 aa).

The protein belongs to the KdsA family.

The protein localises to the cytoplasm. It catalyses the reaction D-arabinose 5-phosphate + phosphoenolpyruvate + H2O = 3-deoxy-alpha-D-manno-2-octulosonate-8-phosphate + phosphate. Its pathway is carbohydrate biosynthesis; 3-deoxy-D-manno-octulosonate biosynthesis; 3-deoxy-D-manno-octulosonate from D-ribulose 5-phosphate: step 2/3. The protein operates within bacterial outer membrane biogenesis; lipopolysaccharide biosynthesis. The protein is 2-dehydro-3-deoxyphosphooctonate aldolase of Nitratidesulfovibrio vulgaris (strain DP4) (Desulfovibrio vulgaris).